A 294-amino-acid chain; its full sequence is Probable 2-(5''-triphosphoribosyl)-3'-dephosphocoenzyme-A synthase (294 aa).

This sequence belongs to the CitG/MdcB family.

The catalysed reaction is 3'-dephospho-CoA + ATP = 2'-(5''-triphospho-alpha-D-ribosyl)-3'-dephospho-CoA + adenine. This Streptococcus pyogenes serotype M49 (strain NZ131) protein is Probable 2-(5''-triphosphoribosyl)-3'-dephosphocoenzyme-A synthase.